Reading from the N-terminus, the 127-residue chain is uncharacterized protein (127 aa).

The residue at position 30 (Thr-30) is a Phosphothreonine. The segment at 51-75 (APTYEQVLYPPASQKKTSNSTSEES) is disordered. Ser-63 carries the phosphoserine modification.

This is an uncharacterized protein from Mus musculus (Mouse).